The primary structure comprises 188 residues: GMP synthase [glutamine-hydrolyzing] subunit A (188 aa).

A Glutamine amidotransferase type-1 domain is found at 3–188 (PLYVVNNYGQ…FSICTGQNKG (186 aa)). C75 serves as the catalytic Nucleophile. Active-site residues include H162 and E164.

Heterodimer composed of a glutamine amidotransferase subunit (A) and a GMP-binding subunit (B).

The enzyme catalyses XMP + L-glutamine + ATP + H2O = GMP + L-glutamate + AMP + diphosphate + 2 H(+). The protein operates within purine metabolism; GMP biosynthesis; GMP from XMP (L-Gln route): step 1/1. Catalyzes the synthesis of GMP from XMP. This Methanospirillum hungatei JF-1 (strain ATCC 27890 / DSM 864 / NBRC 100397 / JF-1) protein is GMP synthase [glutamine-hydrolyzing] subunit A.